We begin with the raw amino-acid sequence, 629 residues long: Polygalacturonase non-catalytic subunit AroGP2 (629 aa).

An N-terminal signal peptide occupies residues 1–27 (MHNKILVSSYILLVLLFSLSSFNIVVA). The propeptide occupies 28 to 109 (KDGDESGNPF…MCAPDLLPSL (82 aa)). N-linked (GlcNAc...) asparagine glycans are attached at residues asparagine 125, asparagine 143, asparagine 255, asparagine 277, asparagine 333, asparagine 368, and asparagine 386. Residues 267–293 (YGQNANGENQNFTSYSTNGNNPQNNFK) show a composition bias toward polar residues. Residues 267–305 (YGQNANGENQNFTSYSTNGNNPQNNFKNYGVGGNGPSET) are disordered. The BURP domain occupies 414–628 (FFREKMLKSG…FENDMTWATA (215 aa)).

In terms of assembly, interacts with polygalacturonase to form heterodimers.

The protein localises to the secreted. Its subcellular location is the extracellular space. It localises to the apoplast. It is found in the cell wall. In terms of biological role, non-catalytic subunit of polygalacturonase. The protein is Polygalacturonase non-catalytic subunit AroGP2 (GP2) of Solanum lycopersicum (Tomato).